Consider the following 247-residue polypeptide: UPF0259 membrane protein BUsg_265 (247 aa).

Helical transmembrane passes span 20 to 40, 82 to 102, 114 to 134, 137 to 157, 188 to 208, and 217 to 237; these read IKII…INVL, IFKI…IITL, IQFS…LNFI, FFIQ…SVLL, IVGT…TVFS, and FIFL…IVYL.

The protein belongs to the UPF0259 family.

The protein localises to the cell membrane. The chain is UPF0259 membrane protein BUsg_265 from Buchnera aphidicola subsp. Schizaphis graminum (strain Sg).